A 357-amino-acid chain; its full sequence is F-box only protein 25 (357 aa).

The interaction with beta-actin stretch occupies residues 1 to 83 (MPFLGQDWRS…NDTNTQCFYR (83 aa)). The F-box domain maps to 225-273 (LTLSDLPVHMLSNILYRFSDGWDIVTLGQVTPTLSALSEDRQLWKKLCQ).

In terms of assembly, part of a SCF (SKP1-cullin-F-box) protein ligase complex consisting of FBXO25, SKP1, CUL1 and RBX1. Interacts directly with SKP1 and CUL1. Interacts (via C-terminus) with beta-actin (via N-terminus).

It localises to the nucleus. The protein operates within protein modification; protein ubiquitination. Its function is as follows. Substrate-recognition component of the SCF (SKP1-CUL1-F-box protein)-type E3 ubiquitin ligase complex. May play a role in accumulation of expanded polyglutamine (polyQ) protein huntingtin (HTT). The sequence is that of F-box only protein 25 (FBXO25) from Bos taurus (Bovine).